The chain runs to 146 residues: Ribonuclease H (146 aa).

An RNase H type-1 domain is found at 1 to 143 (MQKKVTIYTD…CDYLATQAIK (143 aa)). Positions 10, 48, 70, and 135 each coordinate Mg(2+).

The protein belongs to the RNase H family. In terms of assembly, monomer. The cofactor is Mg(2+).

It localises to the cytoplasm. The catalysed reaction is Endonucleolytic cleavage to 5'-phosphomonoester.. Endonuclease that specifically degrades the RNA of RNA-DNA hybrids. The chain is Ribonuclease H from Chlorobium phaeobacteroides (strain BS1).